Here is a 353-residue protein sequence, read N- to C-terminus: Ribosomal RNA small subunit methyltransferase C (353 aa).

It belongs to the methyltransferase superfamily. RsmC family. In terms of assembly, monomer.

It is found in the cytoplasm. The enzyme catalyses guanosine(1207) in 16S rRNA + S-adenosyl-L-methionine = N(2)-methylguanosine(1207) in 16S rRNA + S-adenosyl-L-homocysteine + H(+). Functionally, specifically methylates the guanine in position 1207 of 16S rRNA in the 30S particle. The protein is Ribosomal RNA small subunit methyltransferase C of Marinomonas sp. (strain MWYL1).